The chain runs to 248 residues: 5'-nucleotidase SurE (248 aa).

The a divalent metal cation site is built by aspartate 8, aspartate 9, serine 39, and asparagine 91.

The protein belongs to the SurE nucleotidase family. A divalent metal cation is required as a cofactor.

The protein localises to the cytoplasm. It carries out the reaction a ribonucleoside 5'-phosphate + H2O = a ribonucleoside + phosphate. Its function is as follows. Nucleotidase that shows phosphatase activity on nucleoside 5'-monophosphates. The protein is 5'-nucleotidase SurE of Neisseria meningitidis serogroup C / serotype 2a (strain ATCC 700532 / DSM 15464 / FAM18).